The chain runs to 337 residues: MKRIAVLTSGGDAPGMNAAIRAVVRKAISEGMEVYGINRGYAGMVDGDIFPLGSKEVGDKISRGGTFLYSARYPEFAQLEGQLAGIEQLKKHGIEGVVVIGGDGSYHGAMRLTEHGFPAVGIPGTIDNDIAGTDYTIGFDTAVNTAVEAIDKLRDTSSSHGRTFVVEVMGRNAGDIALWAGIASGADQIIVPEEEFDIHKVVSTIKDDFENRGKNHHIIVLAEGVMSGEAFAQQLKEAGDESDLRVTNLGHILRGGSPTARDRVIASWMGAHAVELLKEGKGGLAVGIHNEELVESPILGSAEDGALFSLTDEGNIVVNNPHKARLDYAALNRSLAQ.

Residue Gly11 participates in ATP binding. Residue 21–25 (RAVVR) participates in ADP binding. Residues 72–73 (RY) and 102–105 (GDGS) contribute to the ATP site. Asp103 contacts Mg(2+). Residue 125–127 (TID) coordinates substrate. The Proton acceptor role is filled by Asp127. ADP is bound at residue Arg154. Substrate is bound by residues Arg162 and 169–171 (MGR). ADP contacts are provided by residues 185–187 (GAD), Arg212, and 214–216 (KNH). Substrate-binding positions include Glu223, Arg245, and 251–254 (HILR).

The protein belongs to the phosphofructokinase type A (PFKA) family. ATP-dependent PFK group I subfamily. Prokaryotic clade 'B1' sub-subfamily. Homotetramer. Mg(2+) is required as a cofactor.

The protein localises to the cytoplasm. It carries out the reaction beta-D-fructose 6-phosphate + ATP = beta-D-fructose 1,6-bisphosphate + ADP + H(+). It functions in the pathway carbohydrate degradation; glycolysis; D-glyceraldehyde 3-phosphate and glycerone phosphate from D-glucose: step 3/4. Its activity is regulated as follows. Allosterically activated by ADP and other diphosphonucleosides, and allosterically inhibited by phosphoenolpyruvate. Catalyzes the phosphorylation of D-fructose 6-phosphate to fructose 1,6-bisphosphate by ATP, the first committing step of glycolysis. In Streptococcus equi subsp. equi (strain 4047), this protein is ATP-dependent 6-phosphofructokinase.